A 253-amino-acid polypeptide reads, in one-letter code: Dof zinc finger protein DOF3.4 (253 aa).

A Dof-type zinc finger spans residues 30 to 84 (LPCPRCDSSNTKFCYYNNYNFSQPRHFCKACRRYWTHGGTLRDVPVGGGTRKSAK). Residues Cys-32, Cys-35, Cys-57, and Cys-60 each coordinate Zn(2+). Positions 73–103 (VPVGGGTRKSAKRSRTCSNSSSSSVSGVVSN) are disordered. Positions 90–103 (SNSSSSSVSGVVSN) are enriched in low complexity.

As to quaternary structure, interacts with OBF4 or OBF5. In terms of tissue distribution, constitutively expressed in the whole plant.

The protein localises to the nucleus. Its function is as follows. Transcription factor that binds specifically to a 5'-AA[AG]G-3' consensus core sequence. Enhances the DNA binding of OBF transcription factors to OCS elements. The chain is Dof zinc finger protein DOF3.4 (DOF3.4) from Arabidopsis thaliana (Mouse-ear cress).